Reading from the N-terminus, the 196-residue chain is Large ribosomal subunit protein bL25 (196 aa).

The interval 177 to 196 (VISIAPPKKDAEAETESAAG) is disordered.

Belongs to the bacterial ribosomal protein bL25 family. CTC subfamily. As to quaternary structure, part of the 50S ribosomal subunit; part of the 5S rRNA/L5/L18/L25 subcomplex. Contacts the 5S rRNA. Binds to the 5S rRNA independently of L5 and L18.

This is one of the proteins that binds to the 5S RNA in the ribosome where it forms part of the central protuberance. The polypeptide is Large ribosomal subunit protein bL25 (Chlorobium limicola (strain DSM 245 / NBRC 103803 / 6330)).